The sequence spans 85 residues: Small ribosomal subunit protein uS17 (85 aa).

This sequence belongs to the universal ribosomal protein uS17 family. Part of the 30S ribosomal subunit.

One of the primary rRNA binding proteins, it binds specifically to the 5'-end of 16S ribosomal RNA. The polypeptide is Small ribosomal subunit protein uS17 (Acinetobacter baumannii (strain AB307-0294)).